Consider the following 434-residue polypeptide: 3-phosphoshikimate 1-carboxyvinyltransferase (434 aa).

3-phosphoshikimate contacts are provided by K22, S23, and R27. K22 is a phosphoenolpyruvate binding site. Residues G93 and R121 each coordinate phosphoenolpyruvate. Positions 168, 169, 170, 199, 320, and 347 each coordinate 3-phosphoshikimate. Q170 lines the phosphoenolpyruvate pocket. D320 acts as the Proton acceptor in catalysis. Positions 351, 394, and 419 each coordinate phosphoenolpyruvate.

Belongs to the EPSP synthase family. Monomer.

It is found in the cytoplasm. It carries out the reaction 3-phosphoshikimate + phosphoenolpyruvate = 5-O-(1-carboxyvinyl)-3-phosphoshikimate + phosphate. It functions in the pathway metabolic intermediate biosynthesis; chorismate biosynthesis; chorismate from D-erythrose 4-phosphate and phosphoenolpyruvate: step 6/7. In terms of biological role, catalyzes the transfer of the enolpyruvyl moiety of phosphoenolpyruvate (PEP) to the 5-hydroxyl of shikimate-3-phosphate (S3P) to produce enolpyruvyl shikimate-3-phosphate and inorganic phosphate. The polypeptide is 3-phosphoshikimate 1-carboxyvinyltransferase (Burkholderia cenocepacia (strain HI2424)).